The primary structure comprises 220 residues: Adenylate kinase (220 aa).

Position 10–15 (10–15) interacts with ATP; sequence GSGKST. The NMP stretch occupies residues 30 to 59; it reads SSGDLIRKEIAEGTPLGREMQAYLARGDLI. Residues S31, R36, 57–59, 83–86, and Q90 each bind AMP; these read DLI and GYPR. Positions 124 to 161 are LID; that stretch reads GRRICPKCGAVYHVEFNPPKIPGRCDVCGAELVQREDD. R125 lines the ATP pocket. Residues C128 and C131 each coordinate Zn(2+). 134 to 135 contacts ATP; the sequence is VY. C148 and C151 together coordinate Zn(2+). Residues R158 and R169 each coordinate AMP. Residue G197 participates in ATP binding.

It belongs to the adenylate kinase family. In terms of assembly, monomer.

The protein resides in the cytoplasm. It catalyses the reaction AMP + ATP = 2 ADP. The protein operates within purine metabolism; AMP biosynthesis via salvage pathway; AMP from ADP: step 1/1. Its function is as follows. Catalyzes the reversible transfer of the terminal phosphate group between ATP and AMP. Plays an important role in cellular energy homeostasis and in adenine nucleotide metabolism. This chain is Adenylate kinase, found in Pyrococcus furiosus (strain ATCC 43587 / DSM 3638 / JCM 8422 / Vc1).